A 290-amino-acid polypeptide reads, in one-letter code: Acetyl-coenzyme A carboxylase carboxyl transferase subunit beta (290 aa).

The region spanning 27–290 (LWVKCPSCES…LQKQPADAVA (264 aa)) is the CoA carboxyltransferase N-terminal domain. Zn(2+) is bound by residues C31, C34, C50, and C53. Residues 31–53 (CPSCESTLYRTDVEANLHVCPKC) form a C4-type zinc finger.

The protein belongs to the AccD/PCCB family. In terms of assembly, acetyl-CoA carboxylase is a heterohexamer composed of biotin carboxyl carrier protein (AccB), biotin carboxylase (AccC) and two subunits each of ACCase subunit alpha (AccA) and ACCase subunit beta (AccD). It depends on Zn(2+) as a cofactor.

It localises to the cytoplasm. The catalysed reaction is N(6)-carboxybiotinyl-L-lysyl-[protein] + acetyl-CoA = N(6)-biotinyl-L-lysyl-[protein] + malonyl-CoA. The protein operates within lipid metabolism; malonyl-CoA biosynthesis; malonyl-CoA from acetyl-CoA: step 1/1. Its function is as follows. Component of the acetyl coenzyme A carboxylase (ACC) complex. Biotin carboxylase (BC) catalyzes the carboxylation of biotin on its carrier protein (BCCP) and then the CO(2) group is transferred by the transcarboxylase to acetyl-CoA to form malonyl-CoA. The polypeptide is Acetyl-coenzyme A carboxylase carboxyl transferase subunit beta (Cupriavidus taiwanensis (strain DSM 17343 / BCRC 17206 / CCUG 44338 / CIP 107171 / LMG 19424 / R1) (Ralstonia taiwanensis (strain LMG 19424))).